We begin with the raw amino-acid sequence, 236 residues long: Uridylate kinase (236 aa).

Lys-12–Gly-15 is a binding site for ATP. Residues Gly-20–Gly-25 form an involved in allosteric activation by GTP region. Gly-54 serves as a coordination point for UMP. Residues Gly-55 and Arg-59 each contribute to the ATP site. Residues Asp-72 and Thr-133–Thr-140 contribute to the UMP site. 2 residues coordinate ATP: Tyr-166 and Asp-169.

It belongs to the UMP kinase family. Homohexamer.

The protein localises to the cytoplasm. The enzyme catalyses UMP + ATP = UDP + ADP. The protein operates within pyrimidine metabolism; CTP biosynthesis via de novo pathway; UDP from UMP (UMPK route): step 1/1. With respect to regulation, allosterically activated by GTP. Inhibited by UTP. Catalyzes the reversible phosphorylation of UMP to UDP. This Clostridium novyi (strain NT) protein is Uridylate kinase.